Reading from the N-terminus, the 377-residue chain is tRNA-specific 2-thiouridylase MnmA (377 aa).

Residues glycine 18–serine 25 and methionine 44 contribute to the ATP site. Residues asparagine 104–aspartate 106 are interaction with target base in tRNA. Cysteine 109 acts as the Nucleophile in catalysis. A disulfide bridge links cysteine 109 with cysteine 209. Glycine 134 provides a ligand contact to ATP. The segment at lysine 159–glutamine 161 is interaction with tRNA. Cysteine 209 (cysteine persulfide intermediate) is an active-site residue. The tract at residues arginine 324–tyrosine 325 is interaction with tRNA.

The protein belongs to the MnmA/TRMU family.

It localises to the cytoplasm. The enzyme catalyses S-sulfanyl-L-cysteinyl-[protein] + uridine(34) in tRNA + AH2 + ATP = 2-thiouridine(34) in tRNA + L-cysteinyl-[protein] + A + AMP + diphosphate + H(+). Functionally, catalyzes the 2-thiolation of uridine at the wobble position (U34) of tRNA, leading to the formation of s(2)U34. This is tRNA-specific 2-thiouridylase MnmA from Photobacterium profundum (strain SS9).